Reading from the N-terminus, the 208-residue chain is Protein-L-isoaspartate O-methyltransferase (208 aa).

The active site involves Ser59.

Belongs to the methyltransferase superfamily. L-isoaspartyl/D-aspartyl protein methyltransferase family.

The protein localises to the cytoplasm. The catalysed reaction is [protein]-L-isoaspartate + S-adenosyl-L-methionine = [protein]-L-isoaspartate alpha-methyl ester + S-adenosyl-L-homocysteine. Catalyzes the methyl esterification of L-isoaspartyl residues in peptides and proteins that result from spontaneous decomposition of normal L-aspartyl and L-asparaginyl residues. It plays a role in the repair and/or degradation of damaged proteins. This chain is Protein-L-isoaspartate O-methyltransferase, found in Escherichia coli O1:K1 / APEC.